The sequence spans 89 residues: Small ribosomal subunit protein uS15 (89 aa).

It belongs to the universal ribosomal protein uS15 family. Part of the 30S ribosomal subunit. Forms a bridge to the 50S subunit in the 70S ribosome, contacting the 23S rRNA.

One of the primary rRNA binding proteins, it binds directly to 16S rRNA where it helps nucleate assembly of the platform of the 30S subunit by binding and bridging several RNA helices of the 16S rRNA. Functionally, forms an intersubunit bridge (bridge B4) with the 23S rRNA of the 50S subunit in the ribosome. The polypeptide is Small ribosomal subunit protein uS15 (Bartonella henselae (strain ATCC 49882 / DSM 28221 / CCUG 30454 / Houston 1) (Rochalimaea henselae)).